The primary structure comprises 104 residues: MSEFKEVTVTKAASVYFDGKVTSRKVTFNDGSFKTLGIMMPGEYKFGTNEEELMEITAGECEILLAGATEWQNISDGQSFGVPANSSFEVRAKTLIDYCCTYIS.

The protein belongs to the nucleoside phosphorylase PpnP family.

It catalyses the reaction a purine D-ribonucleoside + phosphate = a purine nucleobase + alpha-D-ribose 1-phosphate. The enzyme catalyses adenosine + phosphate = alpha-D-ribose 1-phosphate + adenine. The catalysed reaction is cytidine + phosphate = cytosine + alpha-D-ribose 1-phosphate. It carries out the reaction guanosine + phosphate = alpha-D-ribose 1-phosphate + guanine. It catalyses the reaction inosine + phosphate = alpha-D-ribose 1-phosphate + hypoxanthine. The enzyme catalyses thymidine + phosphate = 2-deoxy-alpha-D-ribose 1-phosphate + thymine. The catalysed reaction is uridine + phosphate = alpha-D-ribose 1-phosphate + uracil. It carries out the reaction xanthosine + phosphate = alpha-D-ribose 1-phosphate + xanthine. In terms of biological role, catalyzes the phosphorolysis of diverse nucleosides, yielding D-ribose 1-phosphate and the respective free bases. Can use uridine, adenosine, guanosine, cytidine, thymidine, inosine and xanthosine as substrates. Also catalyzes the reverse reactions. This is Pyrimidine/purine nucleoside phosphorylase from Colwellia psychrerythraea (strain 34H / ATCC BAA-681) (Vibrio psychroerythus).